The sequence spans 239 residues: Mediator of RNA polymerase II transcription subunit 7 (239 aa).

2 disordered regions span residues Met1–Pro21 and Leu43–Val66. Positions Asn46–Val66 are enriched in basic and acidic residues.

The protein belongs to the Mediator complex subunit 7 family. In terms of assembly, component of the Mediator complex.

It is found in the nucleus. Its function is as follows. Component of the Mediator complex, a coactivator involved in the regulated transcription of nearly all RNA polymerase II-dependent genes. Mediator functions as a bridge to convey information from gene-specific regulatory proteins to the basal RNA polymerase II transcription machinery. Mediator is recruited to promoters by direct interactions with regulatory proteins and serves as a scaffold for the assembly of a functional preinitiation complex with RNA polymerase II and the general transcription factors. The sequence is that of Mediator of RNA polymerase II transcription subunit 7 (MED7) from Cryptococcus neoformans var. neoformans serotype D (strain B-3501A) (Filobasidiella neoformans).